Consider the following 628-residue polypeptide: Cytoplasmic dynein 1 intermediate chain 1 (628 aa).

2 stretches are compositionally biased toward basic and acidic residues: residues 1–13 and 20–60; these read MSDK…ELER and QIRE…RETE. A disordered region spans residues 1–114; that stretch reads MSDKSDLKAE…RTLQWDTDPS (114 aa). Residue Ser-2 is modified to N-acetylserine. Phosphoserine is present on Ser-50. Pro residues predominate over residues 70 to 79; that stretch reads PEPPLVPTPM. Positions 80–90 are enriched in low complexity; the sequence is SPSSKSVSTPS. Position 83 is a phosphoserine (Ser-83). Thr-88 is modified (phosphothreonine). 3 positions are modified to phosphoserine: Ser-90, Ser-94, and Ser-97. Over residues 105-114 the composition is skewed to polar residues; the sequence is RTLQWDTDPS. An interaction with DYNLT1 region spans residues 130–146; it reads KLGVSKVTQVDFLPREV. The interval 152 to 204 is disordered; it reads ETQTPLATHQSEEDEEDEEMVEPKIGHDSELENQEKKQETKEAPPRELTEEEK. Position 159 is a phosphothreonine (Thr-159). 2 positions are modified to phosphoserine: Ser-162 and Ser-180. The span at 172–204 shows a compositional bias: basic and acidic residues; it reads VEPKIGHDSELENQEKKQETKEAPPRELTEEEK. 7 WD repeats span residues 268 to 317, 321 to 361, 370 to 411, 420 to 460, 465 to 510, 513 to 553, and 559 to 598; these read SKHR…TTPE, HCQS…RTPV, AHTH…TPQE, SKPV…AGIG, GHQG…PLYS, DNAD…EVPT, and EGAS…VPHN. Ser-618 carries the phosphoserine modification.

The protein belongs to the dynein intermediate chain family. In terms of assembly, homodimer. The cytoplasmic dynein 1 complex consists of two catalytic heavy chains (HCs) and a number of non-catalytic subunits presented by intermediate chains (ICs), light intermediate chains (LICs) and light chains (LCs); the composition seems to vary in respect to the IC, LIC and LC composition. The heavy chain homodimer serves as a scaffold for the probable homodimeric assembly of the respective non-catalytic subunits. The ICs and LICs bind directly to the HC dimer and the LCs assemble on the IC dimer. Interacts with DYNC1H1. Interacts with DYNLT1 and DYNLT3. Interacts with DCTN1. Interacts with DYNLL2. Interacts with MCRS1; the interaction is required for the proper distribution of centriolar satellites.

The protein localises to the cytoplasm. Its subcellular location is the chromosome. It localises to the centromere. It is found in the kinetochore. The protein resides in the cytoskeleton. The protein localises to the spindle pole. Acts as one of several non-catalytic accessory components of the cytoplasmic dynein 1 complex that are thought to be involved in linking dynein to cargos and to adapter proteins that regulate dynein function. Cytoplasmic dynein 1 acts as a motor for the intracellular retrograde motility of vesicles and organelles along microtubules. The intermediate chains mediate the binding of dynein to dynactin via its 150 kDa component (p150-glued) DCTN1. May play a role in mediating the interaction of cytoplasmic dynein with membranous organelles and kinetochores. The sequence is that of Cytoplasmic dynein 1 intermediate chain 1 (Dync1i1) from Mus musculus (Mouse).